The following is a 353-amino-acid chain: UPF0283 membrane protein YcjF (353 aa).

A compositionally biased stretch (basic and acidic residues) spans 1-19; the sequence is MSEPLKPRIDFAEPLKEEP. Positions 1 to 35 are disordered; that stretch reads MSEPLKPRIDFAEPLKEEPTSAFKAQQTFSEAESR. The Periplasmic segment spans residues 1 to 69; that stretch reads MSEPLKPRID…LRPKRSLWRK (69 aa). Residues 70 to 90 traverse the membrane as a helical segment; sequence MVMGGLALFGASVVGQGVQWT. Residues 91–99 lie on the Cytoplasmic side of the membrane; that stretch reads MNAWQTQDW. The helical transmembrane segment at 100–120 threads the bilayer; it reads VALGGCAAGALIVGAGVGSVV. Residues 121–212 are Periplasmic-facing; sequence TEWRRLWRLR…ARREISRFAA (92 aa). A helical transmembrane segment spans residues 213-233; the sequence is ESTLMIAVSPLALVDMAFIAW. Residues 234-353 lie on the Cytoplasmic side of the membrane; sequence RNLRLINRIA…LQKSKSSPEK (120 aa).

Belongs to the UPF0283 family.

Its subcellular location is the cell inner membrane. This chain is UPF0283 membrane protein YcjF (ycjF), found in Salmonella typhimurium (strain LT2 / SGSC1412 / ATCC 700720).